Here is a 330-residue protein sequence, read N- to C-terminus: Malate dehydrogenase (330 aa).

Residue 15–21 coordinates NAD(+); sequence GAGGQIG. Residues Arg95 and Arg101 each contribute to the substrate site. NAD(+) contacts are provided by residues Asn108, Gln115, and 132 to 134; that span reads VGN. The substrate site is built by Asn134 and Arg165. His190 (proton acceptor) is an active-site residue.

The protein belongs to the LDH/MDH superfamily. MDH type 2 family.

It catalyses the reaction (S)-malate + NAD(+) = oxaloacetate + NADH + H(+). Catalyzes the reversible oxidation of malate to oxaloacetate. This Corynebacterium jeikeium (strain K411) protein is Malate dehydrogenase.